Reading from the N-terminus, the 228-residue chain is Cytochrome b-c1 complex subunit Rieske, mitochondrial (228 aa).

Residues 1–26 constitute a mitochondrion transit peptide; that stretch reads MLAKQFISKSLASSLRRLLPVSSTAS. At 27-63 the chain is on the mitochondrial matrix side; that stretch reads SLKGSMMTIPKFTSIRTYTDSPEMPDFSEYQTKSTGD. The helical transmembrane segment at 64–93 threads the bilayer; that stretch reads RSRVISYAMVGTMGALTAAGAQATVHDFLA. Residues 94-228 are Mitochondrial intermembrane-facing; the sequence is SWSASADVLA…TFEGSKIIIG (135 aa). Residues 139-227 form the Rieske domain; the sequence is IQEANSVDIS…YTFEGSKIII (89 aa). Residues Cys-172, His-174, Cys-191, and His-194 each coordinate [2Fe-2S] cluster. A disulfide bridge connects residues Cys-177 and Cys-193.

The protein belongs to the Rieske iron-sulfur protein family. In terms of assembly, component of the ubiquinol-cytochrome c oxidoreductase (cytochrome b-c1 complex, complex III, CIII), a multisubunit enzyme composed of 3 respiratory subunits cytochrome b, cytochrome c1 and Rieske protein, 2 core protein subunits, and additional low-molecular weight protein subunits. The complex exists as an obligatory dimer and forms supercomplexes (SCs) in the inner mitochondrial membrane with cytochrome c oxidase (complex IV, CIV). It depends on [2Fe-2S] cluster as a cofactor.

It localises to the mitochondrion inner membrane. The catalysed reaction is a quinol + 2 Fe(III)-[cytochrome c](out) = a quinone + 2 Fe(II)-[cytochrome c](out) + 2 H(+)(out). In terms of biological role, component of the ubiquinol-cytochrome c oxidoreductase, a multisubunit transmembrane complex that is part of the mitochondrial electron transport chain which drives oxidative phosphorylation. The respiratory chain contains 3 multisubunit complexes succinate dehydrogenase (complex II, CII), ubiquinol-cytochrome c oxidoreductase (cytochrome b-c1 complex, complex III, CIII) and cytochrome c oxidase (complex IV, CIV), that cooperate to transfer electrons derived from NADH and succinate to molecular oxygen, creating an electrochemical gradient over the inner membrane that drives transmembrane transport and the ATP synthase. The cytochrome b-c1 complex catalyzes electron transfer from ubiquinol to cytochrome c, linking this redox reaction to translocation of protons across the mitochondrial inner membrane, with protons being carried across the membrane as hydrogens on the quinol. In the process called Q cycle, 2 protons are consumed from the matrix, 4 protons are released into the intermembrane space and 2 electrons are passed to cytochrome c. The Rieske protein is a catalytic core subunit containing a [2Fe-2S] iron-sulfur cluster. It cycles between 2 conformational states during catalysis to transfer electrons from the quinol bound in the Q(0) site in cytochrome b to cytochrome c1. In Schizosaccharomyces pombe (strain 972 / ATCC 24843) (Fission yeast), this protein is Cytochrome b-c1 complex subunit Rieske, mitochondrial (rip1).